The primary structure comprises 91 residues: Hepcidin-1 (91 aa).

The first 24 residues, 1–24 (MKLSNVFLAAVVILTCVCVFQITA), serve as a signal peptide directing secretion. Residues 25–64 (VPFIQQVQDEHHVESEELQENQHLTEAEHRQTDPLVLFRT) constitute a propeptide that is removed on maturation. Disulfide bonds link Cys73–Cys89, Cys76–Cys79, Cys77–Cys85, and Cys80–Cys88.

The protein belongs to the hepcidin family.

The protein localises to the secreted. In terms of biological role, seems to act as a signaling molecule involved in the maintenance of iron homeostasis. Seems to be required in conjunction with HFE to regulate both intestinal iron absorption and iron storage in macrophages. May also have antimicrobial activity. The polypeptide is Hepcidin-1 (hamp1) (Danio rerio (Zebrafish)).